We begin with the raw amino-acid sequence, 749 residues long: Protein kinase domain-containing protein ppk32 (749 aa).

A Protein kinase domain is found at 21–317; that stretch reads IQKENSVQVG…MFELERSPYF (297 aa). Disordered regions lie at residues 598 to 677 and 706 to 749; these read KKLQ…VTAK and PLIP…KSLL. Polar residues predominate over residues 602–651; the sequence is SKPSSVVPNRITTDPFSSQTKEATSKPSSISPNKATTNIFTSQASLSSQG. Residue serine 632 is modified to Phosphoserine. Composition is skewed to low complexity over residues 657–670 and 721–735; these read SSAS…QRAS and NRRV…NTVT.

Its subcellular location is the cytoplasm. The protein is Protein kinase domain-containing protein ppk32 (ppk32) of Schizosaccharomyces pombe (strain 972 / ATCC 24843) (Fission yeast).